We begin with the raw amino-acid sequence, 376 residues long: Heat stress transcription factor A-2a (376 aa).

A disordered region spans residues 137-168 (LKTIKRRRPPPSSPPSSSSSSSSSQHQQQPAA). The segment covering 151-160 (PSSSSSSSSS) has biased composition (low complexity). Residues 182-229 (VNRLQRDKSVLIAEVVKLRQEQQTTRAQMQAMEERISAAEQKQQQMTV) adopt a coiled-coil conformation. The tract at residues 185–235 (LQRDKSVLIAEVVKLRQEQQTTRAQMQAMEERISAAEQKQQQMTVFLARAM) is hydrophobic repeat HR-A/B. The Nuclear localization signal motif lies at 265–269 (KKRRR). Disordered regions lie at residues 296–319 (VAEP…DTES) and 332–362 (KQRE…DDDD). Positions 307 to 316 (GDGGGGGGGD) are enriched in gly residues. Residues 318–325 (ESFWMQLL) carry the AHA motif. The span at 352–362 (VDNDEEDDDDD) shows a compositional bias: acidic residues. Residues 366–373 (LVQSIYHL) carry the Nuclear export signal motif.

Belongs to the HSF family. Class A subfamily. As to quaternary structure, homotrimer. Post-translationally, exhibits temperature-dependent phosphorylation.

It localises to the cytoplasm. Its subcellular location is the nucleus. Functionally, transcriptional regulator that specifically binds DNA of heat shock promoter elements (HSE). The sequence is that of Heat stress transcription factor A-2a (HSFA2A) from Oryza sativa subsp. japonica (Rice).